A 298-amino-acid chain; its full sequence is tRNA dimethylallyltransferase (298 aa).

Residue 12–19 (GPTASGKT) participates in ATP binding. Residue 14–19 (TASGKT) coordinates substrate. Residues 37–40 (DSRQ) are interaction with substrate tRNA.

Belongs to the IPP transferase family. Monomer. Requires Mg(2+) as cofactor.

The catalysed reaction is adenosine(37) in tRNA + dimethylallyl diphosphate = N(6)-dimethylallyladenosine(37) in tRNA + diphosphate. Its function is as follows. Catalyzes the transfer of a dimethylallyl group onto the adenine at position 37 in tRNAs that read codons beginning with uridine, leading to the formation of N6-(dimethylallyl)adenosine (i(6)A). This Synechococcus sp. (strain CC9902) protein is tRNA dimethylallyltransferase.